Consider the following 152-residue polypeptide: Arginine repressor (152 aa).

This sequence belongs to the ArgR family.

The protein localises to the cytoplasm. Its pathway is amino-acid biosynthesis; L-arginine biosynthesis [regulation]. Its function is as follows. Regulates arginine biosynthesis genes. The sequence is that of Arginine repressor from Lactococcus lactis subsp. lactis (strain IL1403) (Streptococcus lactis).